Reading from the N-terminus, the 167-residue chain is MEETYIDTLDPEKLLQCPYDKNHQIRACRFPYHLIKCRKNHPDVANKLATCPFNARHQVPRAEISHHISSCDDKSCIEQDVVNQTRSLGQETMAESTWRCPPCDEDWDKDLWEQTSTPFVWGTANYCGNNSPASNIVMEHKSNLASGMRVPKSLPYVLPWKNNGNAQ.

CHHC U11-48K-type zinc fingers lie at residues leucine 14–histidine 41 and leucine 48–serine 75. Residues cysteine 17, histidine 23, histidine 33, cysteine 37, cysteine 51, histidine 57, histidine 67, and cysteine 71 each coordinate Zn(2+).

This sequence belongs to the UPF0224 (FAM112) family.

Its subcellular location is the cytoplasm. Required for spermatogenesis and is involved in the suppression of retrotransposon transcription in male germ cells. The chain is Gametocyte-specific factor 1 (GTSF1) from Bos taurus (Bovine).